Reading from the N-terminus, the 394-residue chain is Elongation factor Tu (394 aa).

Residues 10-204 (KPHVNVGTIG…HLDTYIPEPE (195 aa)) enclose the tr-type G domain. Residues 19-26 (GHVDHGKT) are G1. 19 to 26 (GHVDHGKT) is a GTP binding site. Threonine 26 contacts Mg(2+). The interval 60–64 (GITIN) is G2. A G3 region spans residues 81–84 (DCPG). GTP is bound by residues 81 to 85 (DCPGH) and 136 to 139 (NKCD). A G4 region spans residues 136–139 (NKCD). Residues 174–176 (SAL) form a G5 region.

The protein belongs to the TRAFAC class translation factor GTPase superfamily. Classic translation factor GTPase family. EF-Tu/EF-1A subfamily. Monomer.

The protein localises to the cytoplasm. The catalysed reaction is GTP + H2O = GDP + phosphate + H(+). In terms of biological role, GTP hydrolase that promotes the GTP-dependent binding of aminoacyl-tRNA to the A-site of ribosomes during protein biosynthesis. This is Elongation factor Tu from Aeromonas hydrophila subsp. hydrophila (strain ATCC 7966 / DSM 30187 / BCRC 13018 / CCUG 14551 / JCM 1027 / KCTC 2358 / NCIMB 9240 / NCTC 8049).